Consider the following 466-residue polypeptide: Vimentin (466 aa).

Composition is skewed to low complexity over residues 1-13 (MSTRSVSSSSYRR) and 20-33 (TSSRPSSNRSYVTT). The tract at residues 1–33 (MSTRSVSSSSYRRMFGGSGTSSRPSSNRSYVTT) is disordered. Ser-2 bears the N-acetylserine mark. The head stretch occupies residues 2-95 (STRSVSSSSY…FSLADAINTE (94 aa)). Ser-5 carries the post-translational modification Phosphoserine. The residue at position 7 (Ser-7) is a Phosphoserine; by PKA and PKC; alternate. Ser-7 carries O-linked (GlcNAc) serine; alternate glycosylation. Residue Ser-8 is modified to Phosphoserine. Phosphoserine; by PKC occurs at positions 9 and 10. At Thr-20 the chain carries Phosphothreonine. Ser-21 is subject to Phosphoserine; by PKC. Ser-25 carries the phosphoserine; by PKA and PKC modification. Ser-26 is modified (phosphoserine; by PKC). O-linked (GlcNAc) threonine glycosylation is present at Thr-33. Ser-34 is a glycosylation site (O-linked (GlcNAc) serine; alternate). At Ser-34 the chain carries Phosphoserine; by PKC; alternate. A Phosphoserine; by CaMK2, PKA, PKC and ROCK2 modification is found at Ser-39. Position 42 is a phosphoserine; by PKC (Ser-42). Ser-47 carries the post-translational modification Phosphoserine; by PKA. Ser-49 carries the phosphoserine modification. Position 51 is a phosphoserine; by PKA and PKC (Ser-51). Position 53 is a phosphotyrosine (Tyr-53). Phosphoserine occurs at positions 55 and 56. Phosphotyrosine is present on Tyr-61. At Ser-66 the chain carries Phosphoserine; by PKA and PKC. Ser-72 bears the Phosphoserine; by AURKB and ROCK2 mark. The residue at position 73 (Ser-73) is a Phosphoserine. Ser-83 bears the Phosphoserine; by CaMK2 mark. Ser-87 is subject to Phosphoserine. The tract at residues 96–131 (FKNTRTNEKVELQELNDRFANYIDKVRFLEQQNKIL) is coil 1A. A coiled-coil region spans residues 96-131 (FKNTRTNEKVELQELNDRFANYIDKVRFLEQQNKIL). The region spanning 103–411 (EKVELQELND…KLLEGEESRI (309 aa)) is the IF rod domain. Lys-104 is covalently cross-linked (Glycyl lysine isopeptide (Lys-Gly) (interchain with G-Cter in SUMO2)). Position 117 is a phosphotyrosine (Tyr-117). Residues Lys-120, Lys-129, and Lys-139 each carry the N6-acetyllysine; alternate modification. 2 positions are modified to N6-succinyllysine; alternate: Lys-120 and Lys-129. Residues Lys-120, Lys-129, and Lys-139 each participate in a glycyl lysine isopeptide (Lys-Gly) (interchain with G-Cter in SUMO2); alternate cross-link. The segment at 132 to 153 (LAELEQLKGQGKSRLGDLYEEE) is linker 1. Phosphoserine is present on Ser-144. A coiled-coil region spans residues 154–245 (MRELRRQVDQ…KLHDEEIQEL (92 aa)). The tract at residues 154-245 (MRELRRQVDQ…KLHDEEIQEL (92 aa)) is coil 1B. Lys-168 is modified (N6-acetyllysine). Residue Lys-188 is modified to N6-acetyllysine; alternate. Lys-188 carries the post-translational modification N6-succinyllysine; alternate. Residue Ser-214 is modified to Phosphoserine. Residue Lys-223 is modified to N6-acetyllysine; alternate. Residue Lys-223 forms a Glycyl lysine isopeptide (Lys-Gly) (interchain with G-Cter in SUMO2); alternate linkage. Residue Ser-226 is modified to Phosphoserine. The residue at position 235 (Lys-235) is an N6-acetyllysine. Positions 246–268 (QAQIQEQHVQIDVDVSKPDLTAA) are linker 12. A Glycyl lysine isopeptide (Lys-Gly) (interchain with G-Cter in SUMO2) cross-link involves residue Lys-262. The tract at residues 269–407 (LRDVRQQYES…ATYRKLLEGE (139 aa)) is coil 2. The residue at position 294 (Lys-294) is an N6-acetyllysine; alternate. Lys-294 is subject to N6-succinyllysine; alternate. Lys-294 participates in a covalent cross-link: Glycyl lysine isopeptide (Lys-Gly) (interchain with G-Cter in SUMO2); alternate. Residue Ser-299 is modified to Phosphoserine. Positions 303-407 (NRNNDALRQA…ATYRKLLEGE (105 aa)) form a coiled coil. A Glycyl lysine isopeptide (Lys-Gly) (interchain with G-Cter in SUMO2) cross-link involves residue Lys-313. Position 325 is a phosphoserine (Ser-325). Residues 326 to 329 (LTCE) carry the [IL]-x-C-x-x-[DE] motif motif. Lys-373 is modified (N6-acetyllysine; alternate). A Glycyl lysine isopeptide (Lys-Gly) (interchain with G-Cter in SUMO2); alternate cross-link involves residue Lys-373. Positions 408–466 (ESRISLPLPTFSSLNLRETNLESLPLVDTHSKRTLLIKTVETRDGQVINETSQHHDDLE) are tail. Ser-409, Ser-412, Ser-419, and Ser-420 each carry phosphoserine. Thr-426 carries the post-translational modification Phosphothreonine. Ser-430 is modified (phosphoserine). Thr-436 is subject to Phosphothreonine. Ser-438 is subject to Phosphoserine. Lys-439 participates in a covalent cross-link: Glycyl lysine isopeptide (Lys-Gly) (interchain with G-Cter in SUMO2). Lys-445 is modified (N6-acetyllysine; alternate). Lys-445 is subject to N6-succinyllysine; alternate. Residue Lys-445 forms a Glycyl lysine isopeptide (Lys-Gly) (interchain with G-Cter in SUMO2); alternate linkage. Residue Lys-445 forms a Glycyl lysine isopeptide (Lys-Gly) (interchain with G-Cter in SUMO1); alternate linkage. Phosphothreonine occurs at positions 446 and 458. Position 459 is a phosphoserine (Ser-459).

It belongs to the intermediate filament family. As to quaternary structure, homomer assembled from elementary dimers. Identified in complexes that contain VIM, EZR, AHNAK, BFSP1, BFSP2, ANK2, PLEC, PRX and spectrin. Interacts with BCAS3. Interacts with LGSN. Interacts with SYNM. Interacts (via rod region) with PLEC (via CH 1 domain). Interacts with PLEC isoform 1C. Interacts with STK33. Interacts with LARP6. Interacts with RAB8B. Interacts with TOR1A; the interaction associates TOR1A with the cytoskeleton. Interacts with TOR1AIP1. Interacts with DIAPH1. Interacts with EPPK1; interaction is dependent of higher-order structure of intermediate filament. Interacts with the non-receptor tyrosine kinase SRMS; the interaction leads to phosphorylation of VIM. Interacts with NOD2. Interacts (via head region) with CORO1C. Interacts with HDGF. Interacts with PRKCE (via phorbol-ester/DAG-type 2 domain). Interacts with BFSP2. Interacts with PPL. Interacts with PKP1 and PKP2. Interacts with SCRIB (via PDZ domains); the interaction protects SCRIB from proteasomal degradation and facilitates SCRIB localization to intermediate filaments, the interaction is reduced by cell contact inhibition. Post-translationally, phosphorylation by PKN1 inhibits the formation of filaments. Filament disassembly during mitosis is promoted by phosphorylation at Ser-55 as well as by nestin. One of the most prominent phosphoproteins in various cells of mesenchymal origin. Phosphorylation is enhanced during cell division, at which time vimentin filaments are significantly reorganized. Phosphorylated at Ser-56 by CDK5 during neutrophil secretion in the cytoplasm. Phosphorylated by STK33. Phosphorylated on tyrosine residues by SRMS. S-nitrosylation is induced by interferon-gamma and oxidatively-modified low-densitity lipoprotein (LDL(ox)) possibly implicating the iNOS-S100A8/9 transnitrosylase complex. In terms of tissue distribution, detected in eye lens fiber cells (at protein level). Expressed in retinal lens epithelial cells (at protein level). Expressed in Langerhans cells in the epidermis (at protein level).

It localises to the cytoplasm. It is found in the cytoskeleton. The protein localises to the nucleus matrix. The protein resides in the cell membrane. Functionally, vimentins are class-III intermediate filaments found in various non-epithelial cells, especially mesenchymal cells. Vimentin is attached to the nucleus, endoplasmic reticulum, and mitochondria, either laterally or terminally. Plays a role in cell directional movement, orientation, cell sheet organization and Golgi complex polarization at the cell migration front. Protects SCRIB from proteasomal degradation and facilitates its localization to intermediate filaments in a cell contact-mediated manner. Its function is as follows. Involved with LARP6 in the stabilization of type I collagen mRNAs for CO1A1 and CO1A2. The protein is Vimentin of Mus musculus (Mouse).